A 74-amino-acid chain; its full sequence is Anaphase-promoting complex subunit 13 (74 aa).

A disordered region spans residues 33-56; the sequence is LSELPEPEQDNGGTTESVKEQEMK.

The protein belongs to the APC13 family. In terms of assembly, the mammalian APC/C is composed at least of 14 distinct subunits ANAPC1, ANAPC2, CDC27/APC3, ANAPC4, ANAPC5, CDC16/APC6, ANAPC7, CDC23/APC8, ANAPC10, ANAPC11, CDC26/APC12, ANAPC13, ANAPC15 and ANAPC16 that assemble into a complex of at least 19 chains with a combined molecular mass of around 1.2 MDa; APC/C interacts with FZR1 and FBXO5.

It is found in the nucleus. Its pathway is protein modification; protein ubiquitination. In terms of biological role, component of the anaphase promoting complex/cyclosome (APC/C), a cell cycle-regulated E3 ubiquitin ligase that controls progression through mitosis and the G1 phase of the cell cycle. The APC/C complex acts by mediating ubiquitination and subsequent degradation of target proteins: it mainly mediates the formation of 'Lys-11'-linked polyubiquitin chains and, to a lower extent, the formation of 'Lys-48'- and 'Lys-63'-linked polyubiquitin chains. The APC/C complex catalyzes assembly of branched 'Lys-11'-/'Lys-48'-linked branched ubiquitin chains on target proteins. The chain is Anaphase-promoting complex subunit 13 (Anapc13) from Mus musculus (Mouse).